Here is a 586-residue protein sequence, read N- to C-terminus: Dolichyl-diphosphooligosaccharide--protein glycosyltransferase subunit 1 (586 aa).

The N-terminal stretch at 1–15 is a signal peptide; the sequence is MRLLFAIALLGAVFA. Topologically, residues 16-421 are lumenal; that stretch reads EDAWKAANVD…EFEFVDMLRE (406 aa). A helical membrane pass occupies residues 422-442; the sequence is PLLASAFFFSLFFVIIVYSRF. At 443-586 the chain is on the cytoplasmic side; sequence DFTISSDPAK…NRADSVLASI (144 aa).

It belongs to the OST1 family. In terms of assembly, component of the oligosaccharyltransferase (OST) complex.

The protein resides in the endoplasmic reticulum membrane. It is found in the cytoplasmic granule. It participates in protein modification; protein glycosylation. In terms of biological role, subunit of the oligosaccharyl transferase (OST) complex that catalyzes the initial transfer of a defined glycan (Glc(3)Man(9)GlcNAc(2) in eukaryotes) from the lipid carrier dolichol-pyrophosphate to an asparagine residue within an Asn-X-Ser/Thr consensus motif in nascent polypeptide chains, the first step in protein N-glycosylation. N-glycosylation occurs cotranslationally and the complex associates with the Sec61 complex at the channel-forming translocon complex that mediates protein translocation across the endoplasmic reticulum (ER). All subunits are required for a maximal enzyme activity. This chain is Dolichyl-diphosphooligosaccharide--protein glycosyltransferase subunit 1, found in Caenorhabditis elegans.